Here is a 354-residue protein sequence, read N- to C-terminus: Muscleblind-like protein 3 (354 aa).

4 C3H1-type zinc fingers span residues W14–R42, N48–P74, S174–D202, and D210–A236.

The protein belongs to the muscleblind family. Highly expressed in the placenta.

It is found in the nucleus. The protein localises to the cytoplasm. In terms of biological role, mediates pre-mRNA alternative splicing regulation. Acts either as activator or repressor of splicing on specific pre-mRNA targets. Inhibits cardiac troponin-T (TNNT2) pre-mRNA exon inclusion but induces insulin receptor (IR) pre-mRNA exon inclusion in muscle. Antagonizes the alternative splicing activity pattern of CELF proteins. May play a role in myotonic dystrophy pathophysiology (DM). Could inhibit terminal muscle differentiation, acting at approximately the time of myogenin induction. The polypeptide is Muscleblind-like protein 3 (MBNL3) (Homo sapiens (Human)).